The following is a 935-amino-acid chain: Potassium channel AKT1 (935 aa).

Topologically, residues 1–106 (MARWGAARMA…YDRRYRIWET (106 aa)) are cytoplasmic. Residues 107–127 (FLIVLVVYSAWVSPFEFGFIP) traverse the membrane as a helical segment. Residues 128 to 136 (KPTGALATA) are Extracellular-facing. Residues 137 to 157 (DNVVNAFFAVDIILTFFVAYL) traverse the membrane as a helical segment. The Cytoplasmic portion of the chain corresponds to 158–178 (DKMSYMLEDDPKKIAWRYSTT). Residues 179 to 199 (WLVLDVASTIPSEFARRILPS) traverse the membrane as a helical segment. Residues 200-205 (KLRSYG) lie on the Extracellular side of the membrane. Residues 206-226 (FFNMLRLWRLRRVSSLFSRLE) form a helical; Voltage-sensor membrane-spanning segment. Topologically, residues 227–240 (KDRHFNYFWVRCAK) are cytoplasmic. A helical transmembrane segment spans residues 241–261 (LICVTLFAVHCAACFYYLLAD). Topologically, residues 262–288 (RYPVPTSTWIGNYMADFHERSLWIRYV) are extracellular. An intramembrane region (pore-forming) is located at residues 289 to 308 (TSVYWSITTLTTVGYGDLHA). Residues 309 to 312 (ENTR) are Extracellular-facing. A helical transmembrane segment spans residues 313 to 333 (EMIFNIFYMLFNLGLTAYLIG). Topologically, residues 334–935 (NMTNLVVHGT…WDAEKMKGKS (602 aa)) are cytoplasmic. Position 419–538 (419–538 (LFQGVSNDLI…TIIMNNLIQF (120 aa))) interacts with a nucleoside 3',5'-cyclic phosphate. 6 ANK repeats span residues 565–594 (DLPI…DPNE), 598–627 (DGHT…DPNA), 631–660 (EGKV…DLSS), 662–691 (DTGL…DVNR), 695–724 (DGTT…DIDK), and 728–757 (NGWT…ATAS). Residues 826-854 (SQAQRETDHPLSRGGLAATGSPNPSSGSR) are disordered. Residues 845 to 854 (GSPNPSSGSR) show a composition bias toward polar residues. One can recognise a KHA domain in the interval 859–935 (RVTISCPEKG…WDAEKMKGKS (77 aa)).

The protein belongs to the potassium channel family. Plant (TC 1.A.1.4) subfamily. As to quaternary structure, the potassium channel is probably a homo- or heterotetrameric complex of pore-forming subunits. As to expression, expressed in roots and coleoptile of young seedlings.

It is found in the membrane. Highly selective inward-rectifying potassium channel that mediates potassium uptake by plant roots. Assuming opened or closed conformations in response to the voltage difference across the membrane, the channel is activated by hyperpolarization. May be a major salt-sensitive potassium channel in roots. The chain is Potassium channel AKT1 (AKT1) from Oryza sativa subsp. japonica (Rice).